A 167-amino-acid chain; its full sequence is MHLENLLKSLKNTVKKLKTYNFGVSMWKVNIGRLMHALNAFKGSKPLFETDEMLMVKGVCRDEEVEKYGSIKDYLVKKLEKEGFEIVEDIKEIDKFVSRINEILKENPLYPDTFGFERMKESFEMIGCECDYVIAKKRNIMVGVCMYFDKKMKNPKFVEVVGVLLPS.

This is an uncharacterized protein from Methanocaldococcus jannaschii (strain ATCC 43067 / DSM 2661 / JAL-1 / JCM 10045 / NBRC 100440) (Methanococcus jannaschii).